A 121-amino-acid chain; its full sequence is ATP synthase epsilon chain (121 aa).

This sequence belongs to the ATPase epsilon chain family. In terms of assembly, F-type ATPases have 2 components, CF(1) - the catalytic core - and CF(0) - the membrane proton channel. CF(1) has five subunits: alpha(3), beta(3), gamma(1), delta(1), epsilon(1). CF(0) has three main subunits: a, b and c.

Its subcellular location is the cell membrane. Its function is as follows. Produces ATP from ADP in the presence of a proton gradient across the membrane. The polypeptide is ATP synthase epsilon chain (Mycobacterium marinum (strain ATCC BAA-535 / M)).